Here is a 225-residue protein sequence, read N- to C-terminus: MLGLDACELGAQLLELLRLALCARVLLADKEGGPPAVDEVLDEAVPEYRAPGRKSLLEIRQLDPDDRSLAKYKRVLLGPLPPAVDPSLPNVQVTRLTLLSEQAPGPVVMDLTGDLAVLKDQVFVLKEGVDYRVKISFKVHREIVSGLKCLHHTYRRGLRVDKTVYMVGSYGPSAQEYEFVTPVEEAPRGALVRGPYLVVSLFTDDDRTHHLSWEWGLCICQDWKD.

It belongs to the Rho GDI family. In terms of tissue distribution, primarily expressed in pancreas and brain.

It is found in the cytoplasm. Inhibits GDP/GTP exchange reaction of RhoB. Interacts specifically with the GDP- and GTP-bound forms of post-translationally processed Rhob and Rhog proteins, both of which show a growth-regulated expression in mammalian cells. Stimulates the release of the GDP-bound but not the GTP-bound RhoB protein. Also inhibits the GDP/GTP exchange of RhoB but shows less ability to inhibit the dissociation of prebound GTP. This is Rho GDP-dissociation inhibitor 3 (ARHGDIG) from Homo sapiens (Human).